The sequence spans 269 residues: 4-hydroxy-tetrahydrodipicolinate reductase (269 aa).

Residues 9–14 (GAGGRM) and Glu35 contribute to the NAD(+) site. An NADP(+)-binding site is contributed by Arg36. NAD(+) is bound by residues 98–100 (GTT) and 122–125 (ASNY). Catalysis depends on His155, which acts as the Proton donor/acceptor. His156 contributes to the (S)-2,3,4,5-tetrahydrodipicolinate binding site. Catalysis depends on Lys159, which acts as the Proton donor. 165 to 166 (GT) is a (S)-2,3,4,5-tetrahydrodipicolinate binding site.

The protein belongs to the DapB family.

It localises to the cytoplasm. It carries out the reaction (S)-2,3,4,5-tetrahydrodipicolinate + NAD(+) + H2O = (2S,4S)-4-hydroxy-2,3,4,5-tetrahydrodipicolinate + NADH + H(+). The catalysed reaction is (S)-2,3,4,5-tetrahydrodipicolinate + NADP(+) + H2O = (2S,4S)-4-hydroxy-2,3,4,5-tetrahydrodipicolinate + NADPH + H(+). The protein operates within amino-acid biosynthesis; L-lysine biosynthesis via DAP pathway; (S)-tetrahydrodipicolinate from L-aspartate: step 4/4. Functionally, catalyzes the conversion of 4-hydroxy-tetrahydrodipicolinate (HTPA) to tetrahydrodipicolinate. The chain is 4-hydroxy-tetrahydrodipicolinate reductase from Actinobacillus pleuropneumoniae serotype 3 (strain JL03).